The chain runs to 1192 residues: Coiled-coil domain-containing protein 40 (1192 aa).

5 disordered regions span residues 1 to 78 (MMDA…PGMD), 126 to 153 (KAKHRKVRPQAEVESTGRAAPEGELEVS), 173 to 196 (SSPEVSYSDISPLEMGEDDTNVSA), 211 to 246 (EPIEPTEPPEPAEPPKPAETPEDSTVRAPAHPYQRD), and 261 to 289 (GSLTPSDTDDLPLETDEPPQQESVQSTPR). Residues 27 to 45 (PETEVEFIGETAPDTDVEF) show a composition bias toward acidic residues. The span at 215-228 (PTEPPEPAEPPKPA) shows a compositional bias: pro residues. The span at 267–279 (DTDDLPLETDEPP) shows a compositional bias: acidic residues. Residue S306 is modified to Phosphoserine. Coiled coils occupy residues 308 to 369 (EALL…ATKQ), 425 to 451 (KTCQTANEERKKLAALQTEVESLALHL), 581 to 649 (DSEI…MLNK), 733 to 768 (NTNCKIDMHKKTLAEMDKEVKRFNDLITNSESEIAR), 830 to 871 (LQQE…KIAH), 919 to 972 (LRTL…EMRS), and 1044 to 1118 (QQRE…IVTL).

It belongs to the CCDC40 family. As to expression, specifically expressed in the embryonic node and midline.

Its subcellular location is the cytoplasm. It is found in the cell projection. The protein localises to the cilium. Functionally, required for assembly of dynein regulatory complex (DRC) and inner dynein arm (IDA) complexes, which are responsible for ciliary beat regulation, thereby playing a central role in motility in cilia and flagella. Probably acts together with CCDC39 to form a molecular ruler that determines the 96 nanometer (nm) repeat length and arrangements of components in cilia and flagella. Not required for outer dynein arm complexes assembly. Required for axonemal recruitment of CCDC39. The chain is Coiled-coil domain-containing protein 40 from Mus musculus (Mouse).